A 1829-amino-acid polypeptide reads, in one-letter code: Unconventional myosin-Va (1829 aa).

The region spanning T8 to P60 is the Myosin N-terminal SH3-like domain. One can recognise a Myosin motor domain in the interval V69–A764. An ATP-binding site is contributed by G163–T170. Residues A599–T635 form a disordered region. Positions L644–D666 are actin-binding. IQ domains are found at residues L767 to R789, M790 to R814, R815 to C837, M838 to L862, R863 to L887, and K888 to S915. Coiled coils occupy residues V916–T1239 and G1315–V1419. Disordered stretches follow at residues I1106 to K1148 and K1170 to G1199. Over residues T1117–I1131 the composition is skewed to polar residues. Composition is skewed to basic and acidic residues over residues L1137–K1148 and K1170–P1196. Residues T1508–D1784 form the Dilute domain. The residue at position 1734 (T1734) is a Phosphothreonine.

This sequence belongs to the TRAFAC class myosin-kinesin ATPase superfamily. Myosin family. As to quaternary structure, may be a homodimer, which associates with multiple calmodulin or myosin light chains. As to expression, neuronal and non-neuronal cells of the brain.

The protein localises to the golgi apparatus membrane. The catalysed reaction is ATP + H2O = ADP + phosphate + H(+). In terms of biological role, processive actin-based motor that can move in large steps approximating the 36-nm pseudo-repeat of the actin filament. Can hydrolyze ATP in the presence of actin, which is essential for its function as a motor protein. Involved in melanosome transport. Also mediates the transport of vesicles to the plasma membrane. May also be required for some polarization process involved in dendrite formation. This is Unconventional myosin-Va (MYO5A) from Gallus gallus (Chicken).